An 88-amino-acid polypeptide reads, in one-letter code: uncharacterized protein (88 aa).

This sequence to E.coli YihD.

This is an uncharacterized protein from Haemophilus influenzae (strain ATCC 51907 / DSM 11121 / KW20 / Rd).